The following is a 313-amino-acid chain: 7,8-didemethyl-8-hydroxy-5-deazariboflavin synthase (313 aa).

The Radical SAM core domain occupies 4-235 (ITYSPAYTLV…AEITLQIPPN (232 aa)). [4Fe-4S] cluster contacts are provided by Cys-18, Cys-22, and Cys-25.

Belongs to the radical SAM superfamily. CofG family. Consists of two subunits, CofG and CofH. [4Fe-4S] cluster serves as cofactor.

The enzyme catalyses 5-amino-5-(4-hydroxybenzyl)-6-(D-ribitylimino)-5,6-dihydrouracil + S-adenosyl-L-methionine = 7,8-didemethyl-8-hydroxy-5-deazariboflavin + 5'-deoxyadenosine + L-methionine + NH4(+) + H(+). It functions in the pathway cofactor biosynthesis; coenzyme F0 biosynthesis. Catalyzes the radical-mediated synthesis of 7,8-didemethyl-8-hydroxy-5-deazariboflavin from 5-amino-5-(4-hydroxybenzyl)-6-(D-ribitylimino)-5,6-dihydrouracil. The sequence is that of 7,8-didemethyl-8-hydroxy-5-deazariboflavin synthase from Synechocystis sp. (strain ATCC 27184 / PCC 6803 / Kazusa).